A 363-amino-acid polypeptide reads, in one-letter code: Pulmonary surfactant-associated protein B (363 aa).

A signal peptide spans 1–16 (LLWLLLLPTLCGLGAA). Residues 17–180 (DWSAPSLACA…PHTQDLSEQQ (164 aa)) constitute a propeptide that is removed on maturation. The region spanning 18–58 (WSAPSLACARGPAFWCQSLEQALQCRALGHCLQEVWGNARA) is the Saposin A-type domain. 3 consecutive Saposin B-type domains span residues 58–140 (ADDL…KPGL), 184–261 (PLPY…SHED), and 277–352 (QESK…RTTF). Intrachain disulfides connect Cys-62–Cys-136, Cys-65–Cys-130, Cys-93–Cys-105, Cys-188–Cys-257, Cys-191–Cys-251, Cys-215–Cys-226, Cys-281–Cys-348, Cys-284–Cys-342, and Cys-307–Cys-317. A propeptide spanning residues 260-363 (EDSAGPALAS…PLQCIHIPHF (104 aa)) is cleaved from the precursor. N-linked (GlcNAc...) asparagine glycosylation occurs at Asn-293.

As to quaternary structure, homodimer; disulfide-linked.

The protein localises to the secreted. It localises to the extracellular space. Its subcellular location is the surface film. Its function is as follows. Pulmonary surfactant-associated proteins promote alveolar stability by lowering the surface tension at the air-liquid interface in the peripheral air spaces. SP-B increases the collapse pressure of palmitic acid to nearly 70 millinewtons per meter. The polypeptide is Pulmonary surfactant-associated protein B (SFTPB) (Canis lupus familiaris (Dog)).